Here is a 122-residue protein sequence, read N- to C-terminus: Large ribosomal subunit protein uL14c (122 aa).

This sequence belongs to the universal ribosomal protein uL14 family. Part of the 50S ribosomal subunit.

The protein resides in the plastid. It localises to the chloroplast. In terms of biological role, binds to 23S rRNA. This Marchantia polymorpha (Common liverwort) protein is Large ribosomal subunit protein uL14c.